Reading from the N-terminus, the 421-residue chain is UDP-N-acetylglucosamine 1-carboxyvinyltransferase (421 aa).

22–23 serves as a coordination point for phosphoenolpyruvate; sequence KN. Residue R93 participates in UDP-N-acetyl-alpha-D-glucosamine binding. Residue C117 is the Proton donor of the active site. Position 117 is a 2-(S-cysteinyl)pyruvic acid O-phosphothioketal (C117). UDP-N-acetyl-alpha-D-glucosamine is bound by residues 122–126, D308, and V330; that span reads RPVDL.

The protein belongs to the EPSP synthase family. MurA subfamily.

Its subcellular location is the cytoplasm. The enzyme catalyses phosphoenolpyruvate + UDP-N-acetyl-alpha-D-glucosamine = UDP-N-acetyl-3-O-(1-carboxyvinyl)-alpha-D-glucosamine + phosphate. It participates in cell wall biogenesis; peptidoglycan biosynthesis. Its function is as follows. Cell wall formation. Adds enolpyruvyl to UDP-N-acetylglucosamine. The protein is UDP-N-acetylglucosamine 1-carboxyvinyltransferase of Pseudomonas aeruginosa (strain LESB58).